Reading from the N-terminus, the 927-residue chain is DNA-binding protein RFX6 (927 aa).

2 disordered regions span residues 1-21 and 81-108; these read MAKV…PQLP and NFSS…QKKS. Residues 123-198 constitute a DNA-binding region (RFX-type winged-helix); the sequence is TLQWLEDNYI…YHYYGIGIKE (76 aa).

This sequence belongs to the RFX family. As to quaternary structure, interacts with RFX3. In terms of tissue distribution, in the adult pancreas, expression is restricted to the islets where it could be detected in all endocrine lineages.

Its subcellular location is the nucleus. Its function is as follows. Transcription factor required to direct islet cell differentiation during endocrine pancreas development. Specifically required for the differentiation of 4 of the 5 islet cell types and for the production of insulin. Not required for pancreatic PP (polypeptide-producing) cells differentiation. Acts downstream of NEUROG3 and regulates the transcription factors involved in beta-cell maturation and function, thereby restricting the expression of the beta-cell differentiation and specification genes, and thus the beta-cell fate choice. Activates transcription by forming a heterodimer with RFX3 and binding to the X-box in the promoter of target genes. Involved in glucose-stimulated insulin secretion by promoting insulin and L-type calcium channel gene transcription. The sequence is that of DNA-binding protein RFX6 (Rfx6) from Mus musculus (Mouse).